Consider the following 486-residue polypeptide: Serralysin (486 aa).

His187 provides a ligand contact to Zn(2+). Glu188 is a catalytic residue. Zn(2+) is bound by residues His191 and His197. Ca(2+) is bound by residues Arg266, Asp269, Asp298, Gly300, Gly301, Asp303, Thr340, and Glu342. Hemolysin-type calcium-binding repeat units follow at residues 345–362 and 363–380; these read IGGS…ANTL and KGGA…ADNL.

This sequence belongs to the peptidase M10B family. Zn(2+) is required as a cofactor. Requires Ca(2+) as cofactor.

Its subcellular location is the secreted. It catalyses the reaction Preferential cleavage of bonds with hydrophobic residues in P1'.. This chain is Serralysin (prtA1), found in Photorhabdus luminescens (Xenorhabdus luminescens).